Consider the following 460-residue polypeptide: Orexin receptor type 2 (460 aa).

Over 1–54 the chain is Extracellular; that stretch reads MSSTKLEDSLSRRNWSSASELNETQEPFLNPTDYDDEEFLRYLWREYLHPKEYE. N-linked (GlcNAc...) asparagine glycans are attached at residues Asn14 and Asn22. The segment at 33–49 is required for response to orexin-A; the sequence is DYDDEEFLRYLWREYLH. Residues 55 to 75 traverse the membrane as a helical segment; the sequence is WVLIAGYIIVFVVALIGNVLV. At 76–88 the chain is on the cytoplasmic side; the sequence is CVAVWKNHHMRTV. The helical transmembrane segment at 89 to 110 threads the bilayer; that stretch reads TNYFIVNLSLADVLVTITCLPA. Residues 111 to 127 lie on the Extracellular side of the membrane; the sequence is TLVVDITETWFFGQSLC. Cysteines 127 and 210 form a disulfide. Residues 128–150 form a helical membrane-spanning segment; sequence KVIPYLQTVSVSVSVLTLSCIAL. Over 151 to 170 the chain is Cytoplasmic; it reads DRWYAICHPLMFKSTAKRAR. Residues 171 to 191 traverse the membrane as a helical segment; the sequence is NSIVVIWIVSCIIMIPQAIVM. The Extracellular segment spans residues 192–222; that stretch reads ECSSMLPGLANKTTLFTVCDEHWGGEVYPKM. Asn202 carries N-linked (GlcNAc...) asparagine glycosylation. Residues 223–243 form a helical membrane-spanning segment; the sequence is YHICFFLVTYMAPLCLMILAY. The Cytoplasmic portion of the chain corresponds to 244–304; that stretch reads LQIFRKLWCR…QIRARRKTAR (61 aa). A helical membrane pass occupies residues 305–326; sequence MLMVVLLVFAICYLPISILNVL. The Extracellular portion of the chain corresponds to 327–342; the sequence is KRVFGMFTHTEDRETV. The helical transmembrane segment at 343–366 threads the bilayer; it reads YAWFTFSHWLVYANSAANPIIYNF. Residues 367–460 lie on the Cytoplasmic side of the membrane; sequence LSGKFREEFK…SSLLSTWLEV (94 aa).

Belongs to the G-protein coupled receptor 1 family. In terms of tissue distribution, widely expressed. Isoform 2 not detected in skeletal muscle and kidney.

It localises to the cell membrane. Nonselective, high-affinity receptor for both orexin-A and orexin-B neuropeptides. Triggers an increase in cytoplasmic Ca(2+) levels in response to orexin-A binding. The protein is Orexin receptor type 2 (Hcrtr2) of Mus musculus (Mouse).